The chain runs to 239 residues: ATP synthase subunit a (239 aa).

The next 6 membrane-spanning stretches (helical) occupy residues 31–51 (FLLQ…LGLG), 91–111 (VFPL…LGMI), 125–145 (AACA…FHGV), 151–171 (FMGP…IGHI), 194–214 (ILFF…LGLF), and 215–235 (TGFI…AGAI).

It belongs to the ATPase A chain family. As to quaternary structure, F-type ATPases have 2 components, CF(1) - the catalytic core - and CF(0) - the membrane proton channel. CF(1) has five subunits: alpha(3), beta(3), gamma(1), delta(1), epsilon(1). CF(0) has three main subunits: a(1), b(2) and c(9-12). The alpha and beta chains form an alternating ring which encloses part of the gamma chain. CF(1) is attached to CF(0) by a central stalk formed by the gamma and epsilon chains, while a peripheral stalk is formed by the delta and b chains.

The protein localises to the cell inner membrane. Functionally, key component of the proton channel; it plays a direct role in the translocation of protons across the membrane. In Syntrophobacter fumaroxidans (strain DSM 10017 / MPOB), this protein is ATP synthase subunit a.